The chain runs to 331 residues: 3-dehydrosphinganine reductase TSC10B (331 aa).

At 1 to 7 (MAAIFSL) the chain is on the lumenal side. Residues 8 to 28 (FLFFILFIVSLLIILSFIVRP) form a helical membrane-spanning segment. At 29–262 (RSVTIPIKFR…ICFDGIKAGK (234 aa)) the chain is on the cytoplasmic side. The NADPH site is built by Gly-44, Ser-46, Ser-47, Gly-48, Arg-69, Lys-73, and Asp-95. The short motif at 44–48 (GGSSG) is the GXSXG element. Catalysis depends on Ser-172, which acts as the Proton donor. Tyr-186 acts as the Proton acceptor in catalysis. NADP(+) contacts are provided by Tyr-186 and Lys-190. Catalysis depends on Lys-190, which acts as the Lowers pKa of active site Tyr. Residues 263 to 283 (FTVTCHFIGFLLSIASTGMSP) traverse the membrane as a helical segment. Over 284-286 (QGS) the chain is Lumenal. The chain crosses the membrane as a helical span at residues 287-307 (FWLALTEVMFGGLIRLASLVF). The Cytoplasmic segment spans residues 308–331 (QWQWYKTIEKWSQRNKKEVNSKLA).

The protein belongs to the short-chain dehydrogenases/reductases (SDR) family. Expressed in roots, leaves, stems and flowers.

It is found in the endoplasmic reticulum membrane. It carries out the reaction sphinganine + NADP(+) = 3-oxosphinganine + NADPH + H(+). The protein operates within lipid metabolism; sphingolipid metabolism. Functionally, catalyzes the reduction of 3'-oxosphinganine (3-ketodihydrosphingosine/KDS) to sphinganine (dihydrosphingosine/DHS), the second step of de novo sphingolipid biosynthesis. In plants, sphingolipids seems to play a critical role in mineral ion homeostasis, most likely through their involvement in the ion transport functionalities of membrane systems in the root. Is stereospecific for D-erythro-DHS production and does not produce L-threo-DHS. The chain is 3-dehydrosphinganine reductase TSC10B (TSC10B) from Arabidopsis thaliana (Mouse-ear cress).